A 134-amino-acid polypeptide reads, in one-letter code: Phosphomevalonate dehydratase small subunit (134 aa).

Residue S62 is the Proton acceptor of the active site.

The protein belongs to the AcnX type II small subunit family. Heterodimer composed of a large subunit (PMDh-L) and a small subunit (PMDh-S).

The enzyme catalyses (R)-5-phosphomevalonate = (2E)-3-methyl-5-phosphooxypent-2-enoate + H2O. It functions in the pathway isoprenoid biosynthesis; isopentenyl diphosphate biosynthesis via mevalonate pathway. Functionally, component of a hydro-lyase that catalyzes the dehydration of mevalonate 5-phosphate (MVA5P) to form trans-anhydromevalonate 5-phosphate (tAHMP). Involved in the archaeal mevalonate (MVA) pathway, which provides fundamental precursors for isoprenoid biosynthesis, such as isopentenyl diphosphate (IPP) and dimethylallyl diphosphate (DMAPP). The polypeptide is Phosphomevalonate dehydratase small subunit (Pyrococcus furiosus (strain ATCC 43587 / DSM 3638 / JCM 8422 / Vc1)).